The following is a 236-amino-acid chain: UPF0502 protein Bamb_4889 (236 aa).

Belongs to the UPF0502 family.

This Burkholderia ambifaria (strain ATCC BAA-244 / DSM 16087 / CCUG 44356 / LMG 19182 / AMMD) (Burkholderia cepacia (strain AMMD)) protein is UPF0502 protein Bamb_4889.